The following is a 574-amino-acid chain: Arginine--tRNA ligase (574 aa).

The 'HIGH' region motif lies at 124–134 (ANPNGPLHIGH).

Belongs to the class-I aminoacyl-tRNA synthetase family.

It localises to the cytoplasm. It carries out the reaction tRNA(Arg) + L-arginine + ATP = L-arginyl-tRNA(Arg) + AMP + diphosphate. The sequence is that of Arginine--tRNA ligase from Methanococcus aeolicus (strain ATCC BAA-1280 / DSM 17508 / OCM 812 / Nankai-3).